Here is a 208-residue protein sequence, read N- to C-terminus: Large ribosomal subunit protein bL25 (208 aa).

The interval 163–208 is disordered; the sequence is DYSYNHEPDEVVASILPPQKQEETEAESAAQDVEEPEKGTEEEKEE. Basic and acidic residues predominate over residues 198-208; sequence PEKGTEEEKEE.

It belongs to the bacterial ribosomal protein bL25 family. CTC subfamily. As to quaternary structure, part of the 50S ribosomal subunit; part of the 5S rRNA/L5/L18/L25 subcomplex. Contacts the 5S rRNA. Binds to the 5S rRNA independently of L5 and L18.

Functionally, this is one of the proteins that binds to the 5S RNA in the ribosome where it forms part of the central protuberance. The polypeptide is Large ribosomal subunit protein bL25 (Bacillus licheniformis (strain ATCC 14580 / DSM 13 / JCM 2505 / CCUG 7422 / NBRC 12200 / NCIMB 9375 / NCTC 10341 / NRRL NRS-1264 / Gibson 46)).